The following is a 330-amino-acid chain: UPF0324 membrane protein BT_4609 (330 aa).

The next 10 helical transmembrane spans lie at 16–33 (IYVA…LDYI), 38–60 (AWSA…LTCG), 73–95 (YLLQ…LASG), 99–116 (MEFT…GWFI), 128–150 (SYLI…GPVL), 160–182 (ALGT…GHAL), 189–211 (FGTW…AAYG), 221–240 (IKLT…SFIF), 247–269 (ISIP…LLNG), and 284–306 (TLTI…SVGV).

Belongs to the UPF0324 family.

Its subcellular location is the cell membrane. This is UPF0324 membrane protein BT_4609 from Bacteroides thetaiotaomicron (strain ATCC 29148 / DSM 2079 / JCM 5827 / CCUG 10774 / NCTC 10582 / VPI-5482 / E50).